A 1437-amino-acid polypeptide reads, in one-letter code: DNA polymerase III PolC-type (1437 aa).

An Exonuclease domain is found at 420-576 (YVIFDVETTG…YDSETTGHLC (157 aa)).

The protein belongs to the DNA polymerase type-C family. PolC subfamily.

It localises to the cytoplasm. The enzyme catalyses DNA(n) + a 2'-deoxyribonucleoside 5'-triphosphate = DNA(n+1) + diphosphate. In terms of biological role, required for replicative DNA synthesis. This DNA polymerase also exhibits 3' to 5' exonuclease activity. This is DNA polymerase III PolC-type from Pediococcus pentosaceus (strain ATCC 25745 / CCUG 21536 / LMG 10740 / 183-1w).